A 216-amino-acid polypeptide reads, in one-letter code: Uracil phosphoribosyltransferase (216 aa).

5-phospho-alpha-D-ribose 1-diphosphate contacts are provided by residues arginine 85, arginine 110, and 135–143 (DPMVATGYS). Residues isoleucine 200 and 205-207 (GDA) contribute to the uracil site. Residue aspartate 206 participates in 5-phospho-alpha-D-ribose 1-diphosphate binding.

Belongs to the UPRTase family. It depends on Mg(2+) as a cofactor.

It carries out the reaction UMP + diphosphate = 5-phospho-alpha-D-ribose 1-diphosphate + uracil. It participates in pyrimidine metabolism; UMP biosynthesis via salvage pathway; UMP from uracil: step 1/1. With respect to regulation, allosterically activated by GTP. Its function is as follows. Catalyzes the conversion of uracil and 5-phospho-alpha-D-ribose 1-diphosphate (PRPP) to UMP and diphosphate. In Burkholderia cenocepacia (strain ATCC BAA-245 / DSM 16553 / LMG 16656 / NCTC 13227 / J2315 / CF5610) (Burkholderia cepacia (strain J2315)), this protein is Uracil phosphoribosyltransferase.